The primary structure comprises 222 residues: Triosephosphate isomerase (222 aa).

Position 9–11 (9–11) interacts with substrate; the sequence is NFK. His93 (electrophile) is an active-site residue. The active-site Proton acceptor is Glu141. Substrate is bound by residues Ile146, Gly181, and 202–203; that span reads AS.

This sequence belongs to the triosephosphate isomerase family. In terms of assembly, homotetramer; dimer of dimers.

Its subcellular location is the cytoplasm. It carries out the reaction D-glyceraldehyde 3-phosphate = dihydroxyacetone phosphate. The protein operates within carbohydrate biosynthesis; gluconeogenesis. It participates in carbohydrate degradation; glycolysis; D-glyceraldehyde 3-phosphate from glycerone phosphate: step 1/1. Its function is as follows. Involved in the gluconeogenesis. Catalyzes stereospecifically the conversion of dihydroxyacetone phosphate (DHAP) to D-glyceraldehyde-3-phosphate (G3P). In Methanothermus fervidus (strain ATCC 43054 / DSM 2088 / JCM 10308 / V24 S), this protein is Triosephosphate isomerase.